The sequence spans 283 residues: Chromatin modification-related protein png1 (283 aa).

Positions 137-171 are enriched in low complexity; sequence YSPSGASSARQTPAPSRSGASTAGRRRTSATTRGA. Residues 137–224 form a disordered region; sequence YSPSGASSAR…NEMVSEEDME (88 aa). A compositionally biased stretch (polar residues) spans 181–216; the sequence is YTASLADSGSTRGQKVSNATATTQLETKADSTTPNE. A PHD-type zinc finger spans residues 228–277; sequence EKYCFCQQGSYGQMVACDNANCEREWFHMECVGLKAPPEGTWYCEACRDQ. Residues cysteine 231, cysteine 233, cysteine 244, cysteine 249, histidine 255, cysteine 258, cysteine 271, and cysteine 274 each coordinate Zn(2+).

The protein belongs to the ING family. As to quaternary structure, interacts with H3K4me3 and to a lesser extent with H3K4me2. Component of a histone deacetylase complex.

The protein localises to the nucleus. In terms of biological role, component of a histone deacetylase complex responsible for the deacetylation of lysine residues on the N-terminal part of the core histones (H2A, H2B, H3 and H4). Histone deacetylation gives a tag for epigenetic repression and plays an important role in transcriptional regulation, cell cycle progression and developmental events. Has a role in silencing of mating type genes. The protein is Chromatin modification-related protein png1 (png1) of Schizosaccharomyces pombe (strain 972 / ATCC 24843) (Fission yeast).